The chain runs to 568 residues: 2-succinyl-5-enolpyruvyl-6-hydroxy-3-cyclohexene-1-carboxylate synthase (568 aa).

Belongs to the TPP enzyme family. MenD subfamily. As to quaternary structure, homodimer. The cofactor is Mg(2+). Mn(2+) is required as a cofactor. It depends on thiamine diphosphate as a cofactor.

The enzyme catalyses isochorismate + 2-oxoglutarate + H(+) = 5-enolpyruvoyl-6-hydroxy-2-succinyl-cyclohex-3-ene-1-carboxylate + CO2. It participates in quinol/quinone metabolism; 1,4-dihydroxy-2-naphthoate biosynthesis; 1,4-dihydroxy-2-naphthoate from chorismate: step 2/7. It functions in the pathway quinol/quinone metabolism; menaquinone biosynthesis. Catalyzes the thiamine diphosphate-dependent decarboxylation of 2-oxoglutarate and the subsequent addition of the resulting succinic semialdehyde-thiamine pyrophosphate anion to isochorismate to yield 2-succinyl-5-enolpyruvyl-6-hydroxy-3-cyclohexene-1-carboxylate (SEPHCHC). In Mannheimia succiniciproducens (strain KCTC 0769BP / MBEL55E), this protein is 2-succinyl-5-enolpyruvyl-6-hydroxy-3-cyclohexene-1-carboxylate synthase.